An 89-amino-acid chain; its full sequence is Small ribosomal subunit protein uS15 (89 aa).

Belongs to the universal ribosomal protein uS15 family. As to quaternary structure, part of the 30S ribosomal subunit. Forms a bridge to the 50S subunit in the 70S ribosome, contacting the 23S rRNA.

Functionally, one of the primary rRNA binding proteins, it binds directly to 16S rRNA where it helps nucleate assembly of the platform of the 30S subunit by binding and bridging several RNA helices of the 16S rRNA. Its function is as follows. Forms an intersubunit bridge (bridge B4) with the 23S rRNA of the 50S subunit in the ribosome. This is Small ribosomal subunit protein uS15 from Saccharophagus degradans (strain 2-40 / ATCC 43961 / DSM 17024).